Consider the following 289-residue polypeptide: GTPase Era (289 aa).

An Era-type G domain is found at 2-167 (KSGFVSIIGR…LDEICKLLPE (166 aa)). Positions 10–17 (GRTNAGKS) are G1. 10 to 17 (GRTNAGKS) provides a ligand contact to GTP. The tract at residues 36–40 (NATRR) is G2. A G3 region spans residues 57–60 (DTPG). Residues 57–61 (DTPGL) and 116–119 (TKVD) contribute to the GTP site. The tract at residues 116 to 119 (TKVD) is G4. Residues 146-148 (FST) form a G5 region. The KH type-2 domain maps to 194 to 274 (IYENLSDEIP…FLKLDVVVKK (81 aa)).

This sequence belongs to the TRAFAC class TrmE-Era-EngA-EngB-Septin-like GTPase superfamily. Era GTPase family. Monomer.

The protein localises to the cytoplasm. It is found in the cell inner membrane. In terms of biological role, an essential GTPase that binds both GDP and GTP, with rapid nucleotide exchange. Plays a role in 16S rRNA processing and 30S ribosomal subunit biogenesis and possibly also in cell cycle regulation and energy metabolism. This Campylobacter concisus (strain 13826) protein is GTPase Era.